A 432-amino-acid chain; its full sequence is Adenylosuccinate synthetase (432 aa).

Residues 13 to 19 and 41 to 43 each bind GTP; these read GDEGKGK and GHT. Catalysis depends on Asp-14, which acts as the Proton acceptor. Mg(2+)-binding residues include Asp-14 and Gly-41. Residues 14 to 17, 39 to 42, Thr-130, Arg-144, Gln-225, Thr-240, and Arg-304 each bind IMP; these read DEGK and NAGH. His-42 acts as the Proton donor in catalysis. Substrate is bound at residue 300 to 306; it reads AVTGRPR. GTP is bound by residues Arg-306, 332–334, and 415–417; these read KLD and STG.

The protein belongs to the adenylosuccinate synthetase family. In terms of assembly, homodimer. Mg(2+) is required as a cofactor.

It is found in the cytoplasm. The enzyme catalyses IMP + L-aspartate + GTP = N(6)-(1,2-dicarboxyethyl)-AMP + GDP + phosphate + 2 H(+). Its pathway is purine metabolism; AMP biosynthesis via de novo pathway; AMP from IMP: step 1/2. Plays an important role in the de novo pathway of purine nucleotide biosynthesis. Catalyzes the first committed step in the biosynthesis of AMP from IMP. The protein is Adenylosuccinate synthetase of Haemophilus influenzae (strain 86-028NP).